We begin with the raw amino-acid sequence, 241 residues long: B9 domain-containing protein 1 (241 aa).

Residues 1–42 (MSASEGISLPGNEETTPPHEKHKQKAKKAKKKSRSAKESVPN) are disordered. The span at 20 to 34 (EKHKQKAKKAKKKSR) shows a compositional bias: basic residues. In terms of domain architecture, C2 B9-type spans 53-197 (FSLSIVGQIV…TSWLLRREPE (145 aa)).

The protein belongs to the B9D family. Probable component of the tectonic-like complex (also named MKS complex), composed of B9d1, B9d2, Cc2d2a, Mks1 and tctn. As to expression, expressed in type I sensory neurons (at protein level). Expressed in spermatids and spermatocytes (at protein level).

The protein resides in the cytoplasm. It localises to the cytoskeleton. It is found in the cilium basal body. Functionally, probable component of the tectonic-like complex (also named MKS complex), a complex localized at the transition zone of primary cilia. Required for ciliary structure and function. This chain is B9 domain-containing protein 1, found in Drosophila melanogaster (Fruit fly).